A 501-amino-acid polypeptide reads, in one-letter code: Ectoine/hydroxyectoine transporter (501 aa).

Transmembrane regions (helical) follow at residues 9-29, 45-65, 86-106, 137-157, 190-210, 220-240, 258-278, 311-331, 343-363, 395-415, 441-461, and 465-485; these read PVFYVSAFVVFLLVIIGATLP, IHFGWFYLLAVFVFVVFLITL, FFTWIGMLFSAGFGAGLVFWG, AFFHWGVSQWSVFAIVGLVIA, LAVIATVMGVATSLGLGILQM, VPTSIWVQMAIAGVMLITYLI, LGSLFIIIVFVFMAGPTVFIL, WTIFYWAWSTAWSPFVGAFIA, VLGVLVVSPAIACIWIAAFGG, LPMTTILSILSIFLIFTFLVT, IVWGLLITAIAVVLLLAGGLE, and TASLISALPFTVILLLMMASF.

The protein belongs to the BCCT transporter (TC 2.A.15) family.

It localises to the cell inner membrane. In terms of biological role, mediates the import of ectoine and hydroxyectoine, which function as osmotic and cold stress protectants. Also has minor uptake activities for the compatible solutes proline and glycine betaine. This chain is Ectoine/hydroxyectoine transporter, found in Virgibacillus pantothenticus.